Here is a 585-residue protein sequence, read N- to C-terminus: Pyruvate kinase (585 aa).

Arg32 is a binding site for substrate. K(+)-binding residues include Asn34, Ser36, Asp66, and Thr67. 34-37 (NFSH) is a binding site for ATP. ATP contacts are provided by Arg73 and Lys156. A Mg(2+)-binding site is contributed by Glu221. 3 residues coordinate substrate: Gly244, Asp245, and Thr277. Asp245 contributes to the Mg(2+) binding site.

Belongs to the pyruvate kinase family. This sequence in the C-terminal section; belongs to the PEP-utilizing enzyme family. It depends on Mg(2+) as a cofactor. K(+) is required as a cofactor.

The enzyme catalyses pyruvate + ATP = phosphoenolpyruvate + ADP + H(+). Its pathway is carbohydrate degradation; glycolysis; pyruvate from D-glyceraldehyde 3-phosphate: step 5/5. The polypeptide is Pyruvate kinase (pyk) (Staphylococcus aureus (strain USA300)).